The following is a 354-amino-acid chain: Phosphate acyltransferase (354 aa).

The protein belongs to the PlsX family. As to quaternary structure, homodimer. Probably interacts with PlsY.

It is found in the cytoplasm. The catalysed reaction is a fatty acyl-[ACP] + phosphate = an acyl phosphate + holo-[ACP]. It participates in lipid metabolism; phospholipid metabolism. In terms of biological role, catalyzes the reversible formation of acyl-phosphate (acyl-PO(4)) from acyl-[acyl-carrier-protein] (acyl-ACP). This enzyme utilizes acyl-ACP as fatty acyl donor, but not acyl-CoA. The chain is Phosphate acyltransferase from Bordetella petrii (strain ATCC BAA-461 / DSM 12804 / CCUG 43448).